Reading from the N-terminus, the 102-residue chain is Acylphosphatase 1 (102 aa).

An Acylphosphatase-like domain is found at 12–100 (TRLVRVRGRV…PRFDRFEQLP (89 aa)). Active-site residues include R27 and N45.

It belongs to the acylphosphatase family.

The enzyme catalyses an acyl phosphate + H2O = a carboxylate + phosphate + H(+). This Ralstonia nicotianae (strain ATCC BAA-1114 / GMI1000) (Ralstonia solanacearum) protein is Acylphosphatase 1 (acyP1).